The primary structure comprises 548 residues: MASAAVGNYEEEIVRPVADFSPSLWGDHFLSFSIDNHVAQKYAQEIEPLKEQTRSMLVATGRKLVDTLNLIDTIERLGISYHFEKEIDEILDQIYNQNSNSSDLFTSALLFRLLRQHGFNISPEIFSKFQDENGKFKESLASDVVGLLNLYEASHVRTHADDILEAALAFSTIHLESAAPHLKSPLREQVAHALEQCLHKGVPRVETRFFISSIYEKEQSKNNVLLRFAILDFNLLQMLHKQELAEVSRWWKDLDFVTTLPYARDRVVECYFWALGVYFEPQYSQARVMLVKTISMISIVDDTFDAYGTVKELETYTDAIQRWDINEIDRLPDYMKISYKAILDLYKDYEKELSSAGRSHIVCHAIERMKEVVRNYNVESTWFIEGYMPPVSEYLSNALATTTYYYLATTSYLGMKSATEQDFEWLSKNPKILEASVIICRVIDDTATYEVEKSRGQIATGIECCMRDYGVSTKEAMDKFQQMAETAWKDLNEGLLRPTPVSAELLTPILNLARIVEVTYIHNLDGYTHPEKVLKPHIIGLLVDSIDI.

5 residues coordinate Mg(2+): Asp301, Asp305, Asp444, Thr448, and Glu452. The short motif at 301-305 (DDTFD) is the DDXXD motif element.

It belongs to the terpene synthase family. Monomer. It depends on Mg(2+) as a cofactor.

The protein localises to the cytoplasm. The enzyme catalyses (2E,6E)-farnesyl diphosphate = (+)-5-epi-aristolochene + diphosphate. Its pathway is secondary metabolite biosynthesis; terpenoid biosynthesis. Catalyzes the cyclization of trans,trans-farnesyl diphosphate (FPP) to the bicyclic intermediate 5-epi-aristolochene, initial step in the conversion of FPP to the sesquiterpenoid antifungal phytoalexin capsidiol. Produces germacrene A as an enzyme-bound intermediate that is not released by the enzyme, but is further cyclized to produce the bicyclic 5-epi-aristolochene. The chain is Probable 5-epi-aristolochene synthase 4 from Nicotiana attenuata (Coyote tobacco).